A 100-amino-acid polypeptide reads, in one-letter code: Protein RADIALIS-like 1 (100 aa).

An SANT domain is found at 9–64; sequence QSSGSWTAKQNKAFEQALATYDQDTPNRWQNVAKVVGGKTTEEVKRHYELLVQDIN. The segment at 73 to 100 is disordered; that stretch reads FPNYRTSGGCTNGRLSQEEKRMRNMRLQ. Positions 76-87 are enriched in polar residues; it reads YRTSGGCTNGRL.

It is found in the nucleus. Functionally, probable transcription factor. This chain is Protein RADIALIS-like 1 (RL1), found in Arabidopsis thaliana (Mouse-ear cress).